The following is an 800-amino-acid chain: Nucleolar complex protein 3 homolog (800 aa).

Disordered regions lie at residues 27-93 (KLKN…DMMD) and 160-187 (GIIPQTREKPVTDSNKDEEDQEEERELE). The span at 40–51 (KKYRKEQRKLRQ) shows a compositional bias: basic residues. The segment covering 66–78 (NPKEKRPGKRIER) has biased composition (basic and acidic residues). The segment covering 79-93 (EEEEEEEALPLDMMD) has biased composition (acidic residues). Residues 160–174 (GIIPQTREKPVTDSN) show a composition bias toward basic and acidic residues. Acidic residues predominate over residues 175–187 (KDEEDQEEERELE). A Glycyl lysine isopeptide (Lys-Gly) (interchain with G-Cter in SUMO2) cross-link involves residue Lys-333. Residues 451–490 (KEKRKSLSRMQRKWKKAEEKLERELREAEASESTEKKLKL) are a coiled coil. At Ser-787 the chain carries Phosphoserine.

This sequence belongs to the CBF/MAK21 family. As to expression, expressed in colon, heart, kidney, liver, lung, placenta, skeletal muscle, small intestine, spleen and thymus.

The protein resides in the nucleus. It is found in the nucleolus. The protein localises to the nucleus speckle. May be required for adipogenesis. The polypeptide is Nucleolar complex protein 3 homolog (NOC3L) (Homo sapiens (Human)).